Here is a 106-residue protein sequence, read N- to C-terminus: Nucleoid-associated protein Smal_0858 (106 aa).

The interval 81-106 (IDAESKSKMGSATAGMQLPPGMKLPF) is disordered.

This sequence belongs to the YbaB/EbfC family. As to quaternary structure, homodimer.

It localises to the cytoplasm. The protein localises to the nucleoid. Functionally, binds to DNA and alters its conformation. May be involved in regulation of gene expression, nucleoid organization and DNA protection. This is Nucleoid-associated protein Smal_0858 from Stenotrophomonas maltophilia (strain R551-3).